The primary structure comprises 97 residues: Protein CYSTEINE-RICH TRANSMEMBRANE MODULE 7 (97 aa).

The interval 1–27 (MASYHVSHDSYQSPGPSPLYQPIIEAP) is disordered. The segment covering 15 to 27 (GPSPLYQPIIEAP) has biased composition (pro residues). Residues 68–88 (YVGCFPFLRSCLTTLCCCWFV) traverse the membrane as a helical segment.

Belongs to the CYSTM1 family. Homodimer and heterodimers. Interacts with CYSTM3, CYSTM4, CYSTM5, CYSTM6, CYSTM10, WIH1/CYSTM13 and CYSTM11. Binds weakly to CYSTM1, CYSTM2 and CYSTM12. As to expression, mostly expressed in siliques and, to a lower extent, in stems, roots, leaves and flowers.

It is found in the cell membrane. Its function is as follows. Involved in resistance to abiotic stress. This Arabidopsis thaliana (Mouse-ear cress) protein is Protein CYSTEINE-RICH TRANSMEMBRANE MODULE 7.